The primary structure comprises 321 residues: CRISPR system ring nuclease SSO1393 (321 aa).

It belongs to the cOA ring nuclease family. As to quaternary structure, homodimer. The cofactor is Does not require a metal cofactor..

The protein resides in the cytoplasm. The enzyme catalyses cyclic tetraadenylate = 2 5'-hydroxy-diadenylate 2',3'-cylic phosphate. Functionally, CRISPR (clustered regularly interspaced short palindromic repeat) is an adaptive immune system that provides protection against mobile genetic elements (viruses, transposable elements and conjugative plasmids). CRISPR clusters contain spacers, sequences complementary to antecedent mobile elements, and target invading nucleic acids. CRISPR clusters are transcribed and processed into CRISPR RNA (crRNA). A nuclease that degrades cyclic oligoadenylates (cOA), second messengers that induce an antiviral state important for defense against invading nucleic acids. Destruction of cOA deactivates the Csx1 ribonuclease, preventing uncontrolled degradation of cellular RNA. Slowly degrades cA4 (a tetraadenylate ring) into first a linear tetraadenylate product and secondly into a linear diadenylate product with 5'-OH and 2',3'-cyclic phosphate termini. Is 10-fold less active than SSO2081, suggesting it plays a minor role in cA4 degradation. There may be 2 active sites per homodimer. The protein is CRISPR system ring nuclease SSO1393 of Saccharolobus solfataricus (strain ATCC 35092 / DSM 1617 / JCM 11322 / P2) (Sulfolobus solfataricus).